The chain runs to 116 residues: Host transcription reprogramming factor 4 (116 aa).

A signal peptide spans 1 to 24 (MHIIHISKFMALLAISTIAIPTRG). Residues 24 to 53 (GRSEVDSRDVNQAQTVTSGSSIAPSGSEKR) form a disordered region. Residues 33–47 (VNQAQTVTSGSSIAP) are compositionally biased toward polar residues. A C2H2-type; degenerate zinc finger spans residues 74-96 (FQCPHCKDGISNRVALYTHVKAF).

It localises to the secreted. Its subcellular location is the host nucleus. Probable secreted effector that translocates into the nuclei of host cells to reprogram the expression of targeted genes by binding on effector binding elements in rice. This chain is Host transcription reprogramming factor 4, found in Pyricularia oryzae (strain 70-15 / ATCC MYA-4617 / FGSC 8958) (Rice blast fungus).